The following is an 89-amino-acid chain: DNA/RNA-binding protein Alba (89 aa).

It belongs to the histone-like Alba family.

It is found in the cytoplasm. It localises to the chromosome. In terms of biological role, binds double-stranded DNA tightly but without sequence specificity. Involved in DNA compaction. The polypeptide is DNA/RNA-binding protein Alba (Methanococcus maripaludis (strain DSM 14266 / JCM 13030 / NBRC 101832 / S2 / LL)).